Reading from the N-terminus, the 311-residue chain is Ribosomal RNA small subunit methyltransferase H (311 aa).

S-adenosyl-L-methionine-binding positions include 33-35 (AGH), Asp-53, Phe-80, Asp-101, and Gln-108.

This sequence belongs to the methyltransferase superfamily. RsmH family.

Its subcellular location is the cytoplasm. It carries out the reaction cytidine(1402) in 16S rRNA + S-adenosyl-L-methionine = N(4)-methylcytidine(1402) in 16S rRNA + S-adenosyl-L-homocysteine + H(+). Functionally, specifically methylates the N4 position of cytidine in position 1402 (C1402) of 16S rRNA. This is Ribosomal RNA small subunit methyltransferase H from Clostridioides difficile (strain 630) (Peptoclostridium difficile).